Here is an 831-residue protein sequence, read N- to C-terminus: MutS protein homolog 5 (831 aa).

A disordered region spans residues Met-1–Glu-43. Gly-589–Ser-596 contributes to the ATP binding site.

It belongs to the DNA mismatch repair MutS family. In terms of assembly, heterooligomer of MSH4 and MSH5. Interacts with HJURP. Interacts with C7h12orf40/REDIC1.

Its function is as follows. Involved in DNA mismatch repair and meiotic recombination processes. Facilitates crossovers between homologs during meiosis. The polypeptide is MutS protein homolog 5 (Msh5) (Rattus norvegicus (Rat)).